Reading from the N-terminus, the 254-residue chain is Glucosamine-6-phosphate deaminase (254 aa).

Asp65 serves as the catalytic Proton acceptor; for enolization step. Asn134 acts as the For ring-opening step in catalysis. The Proton acceptor; for ring-opening step role is filled by His136. The For ring-opening step role is filled by Glu141.

This sequence belongs to the glucosamine/galactosamine-6-phosphate isomerase family. NagB subfamily.

The enzyme catalyses alpha-D-glucosamine 6-phosphate + H2O = beta-D-fructose 6-phosphate + NH4(+). The protein operates within amino-sugar metabolism; N-acetylneuraminate degradation; D-fructose 6-phosphate from N-acetylneuraminate: step 5/5. Catalyzes the reversible isomerization-deamination of glucosamine 6-phosphate (GlcN6P) to form fructose 6-phosphate (Fru6P) and ammonium ion. The sequence is that of Glucosamine-6-phosphate deaminase from Corynebacterium aurimucosum (strain ATCC 700975 / DSM 44827 / CIP 107346 / CN-1) (Corynebacterium nigricans).